Consider the following 175-residue polypeptide: Hypoxanthine-guanine phosphoribosyltransferase (175 aa).

Diphosphate contacts are provided by K40 and G41. E96 and D97 together coordinate Mg(2+). D100 acts as the Proton acceptor in catalysis. GMP-binding positions include K128, 149–150, and D156; that span reads FL. R162 is a diphosphate binding site.

This sequence belongs to the purine/pyrimidine phosphoribosyltransferase family. The cofactor is Mg(2+).

It localises to the cytoplasm. It catalyses the reaction IMP + diphosphate = hypoxanthine + 5-phospho-alpha-D-ribose 1-diphosphate. The catalysed reaction is GMP + diphosphate = guanine + 5-phospho-alpha-D-ribose 1-diphosphate. It participates in purine metabolism; IMP biosynthesis via salvage pathway; IMP from hypoxanthine: step 1/1. Its pathway is purine metabolism; GMP biosynthesis via salvage pathway; GMP from guanine: step 1/1. In terms of biological role, purine salvage pathway enzyme that catalyzes the transfer of the ribosyl-5-phosphate group from 5-phospho-alpha-D-ribose 1-diphosphate (PRPP) to the N9 position of the 6-oxopurines hypoxanthine and guanine to form the corresponding ribonucleotides IMP (inosine 5'-monophosphate) and GMP (guanosine 5'-monophosphate), with the release of PPi. This is Hypoxanthine-guanine phosphoribosyltransferase (hpt) from Mycoplasma genitalium (strain ATCC 33530 / DSM 19775 / NCTC 10195 / G37) (Mycoplasmoides genitalium).